Reading from the N-terminus, the 270-residue chain is Phosphatidylglycerol--prolipoprotein diacylglyceryl transferase (270 aa).

The next 4 helical transmembrane spans lie at 19–39, 56–76, 92–112, and 116–136; these read FPVY…LWLA, LVLI…VIFE, QGGL…VLFA, and GLSF…GQAI. A 1,2-diacyl-sn-glycero-3-phospho-(1'-sn-glycerol) is bound at residue Arg-138. The next 3 membrane-spanning stretches (helical) occupy residues 178 to 198, 206 to 226, and 236 to 256; these read HPTF…LLAL, GELF…VEGL, and LRIA…FIIV.

It belongs to the Lgt family.

The protein resides in the cell membrane. It catalyses the reaction L-cysteinyl-[prolipoprotein] + a 1,2-diacyl-sn-glycero-3-phospho-(1'-sn-glycerol) = an S-1,2-diacyl-sn-glyceryl-L-cysteinyl-[prolipoprotein] + sn-glycerol 1-phosphate + H(+). It participates in protein modification; lipoprotein biosynthesis (diacylglyceryl transfer). Functionally, catalyzes the transfer of the diacylglyceryl group from phosphatidylglycerol to the sulfhydryl group of the N-terminal cysteine of a prolipoprotein, the first step in the formation of mature lipoproteins. The sequence is that of Phosphatidylglycerol--prolipoprotein diacylglyceryl transferase from Bacillus cereus (strain ATCC 14579 / DSM 31 / CCUG 7414 / JCM 2152 / NBRC 15305 / NCIMB 9373 / NCTC 2599 / NRRL B-3711).